An 88-amino-acid polypeptide reads, in one-letter code: UPF0297 protein str1959 (88 aa).

The protein belongs to the UPF0297 family.

This Streptococcus thermophilus (strain CNRZ 1066) protein is UPF0297 protein str1959.